The primary structure comprises 231 residues: Enolase-phosphatase E1 (231 aa).

The protein belongs to the HAD-like hydrolase superfamily. MasA/MtnC family. Monomer. Requires Mg(2+) as cofactor.

It catalyses the reaction 5-methylsulfanyl-2,3-dioxopentyl phosphate + H2O = 1,2-dihydroxy-5-(methylsulfanyl)pent-1-en-3-one + phosphate. Its pathway is amino-acid biosynthesis; L-methionine biosynthesis via salvage pathway; L-methionine from S-methyl-5-thio-alpha-D-ribose 1-phosphate: step 3/6. It functions in the pathway amino-acid biosynthesis; L-methionine biosynthesis via salvage pathway; L-methionine from S-methyl-5-thio-alpha-D-ribose 1-phosphate: step 4/6. In terms of biological role, bifunctional enzyme that catalyzes the enolization of 2,3-diketo-5-methylthiopentyl-1-phosphate (DK-MTP-1-P) into the intermediate 2-hydroxy-3-keto-5-methylthiopentenyl-1-phosphate (HK-MTPenyl-1-P), which is then dephosphorylated to form the acireductone 1,2-dihydroxy-3-keto-5-methylthiopentene (DHK-MTPene). The chain is Enolase-phosphatase E1 from Stenotrophomonas maltophilia (strain K279a).